Here is a 311-residue protein sequence, read N- to C-terminus: Aquaporin Lacbi1:392091 (311 aa).

The Cytoplasmic portion of the chain corresponds to 1 to 16; sequence MHPQVASLFDNVYEDL. The helical transmembrane segment at 17–37 threads the bilayer; that stretch reads AAATLEFIGTAFFLLFGLGGI. Residues 38–56 lie on the Extracellular side of the membrane; sequence QASTAEDTASGQPPASGIE. A helical transmembrane segment spans residues 57 to 77; sequence HVLYISTCMGLSLVVSAWLFF. Residue arginine 78 is a topological domain, cytoplasmic. Residues 79–99 traverse the membrane as a helical segment; the sequence is VTGGLFNPNISFALLLVGGLK. Positions 85-87 match the NPA 1 motif; that stretch reads NPN. Proline 100 is a topological domain (extracellular). A helical transmembrane segment spans residues 101–121; the sequence is LRFVLFCIAQLTGAIAGAAIV. Over 122 to 143 the chain is Cytoplasmic; it reads RGLTSAPLSVNNVLQQGTSAAQ. The helical transmembrane segment at 144–164 threads the bilayer; the sequence is GVFIEMFITAALVLSVLMLAA. The Extracellular segment spans residues 165 to 168; the sequence is EKHE. Residues 169–189 form a helical membrane-spanning segment; it reads ATPFAPVGIGLTLFACHLFAV. The Cytoplasmic segment spans residues 190–215; the sequence is YYTGAAMNSARAFGPAVISGFPEPQH. An NPA 2 motif is present at residues 197 to 199; the sequence is NSA. A helical transmembrane segment spans residues 216-236; that stretch reads WVYWVGPFLGSLLGAGFYATL. Over 237–311 the chain is Extracellular; the sequence is KHYKYWHLNP…TSSRTNFSPV (75 aa). The tract at residues 276-311 is disordered; sequence DEETRNGCASNEEGVRATGDEKSSNATSSRTNFSPV. The segment covering 288–298 has biased composition (basic and acidic residues); sequence EGVRATGDEKS. A compositionally biased stretch (polar residues) spans 299 to 311; the sequence is SNATSSRTNFSPV. N-linked (GlcNAc...) asparagine glycosylation is present at asparagine 300.

The protein belongs to the MIP/aquaporin (TC 1.A.8) family.

The protein resides in the membrane. The enzyme catalyses H2O(in) = H2O(out). It carries out the reaction NH4(+)(in) = NH4(+)(out). Water channel required to facilitate the transport of water across membranes. Also enables low but statistically significant ammonium permeability. May be involved in fungal nitrogen (ammonium) support of the plant host in symbiosis. The protein is Aquaporin Lacbi1:392091 of Laccaria bicolor (strain S238N-H82 / ATCC MYA-4686) (Bicoloured deceiver).